Reading from the N-terminus, the 214-residue chain is Large ribosomal subunit protein bL25 (214 aa).

The interval 179 to 214 (VPPTQGPSEAEIEEVEAGDADTPEPEVVGEKEEDEE) is disordered. Residues 188–202 (AEIEEVEAGDADTPE) show a composition bias toward acidic residues.

Belongs to the bacterial ribosomal protein bL25 family. CTC subfamily. As to quaternary structure, part of the 50S ribosomal subunit; part of the 5S rRNA/L5/L18/L25 subcomplex. Contacts the 5S rRNA. Binds to the 5S rRNA independently of L5 and L18.

Its function is as follows. This is one of the proteins that binds to the 5S RNA in the ribosome where it forms part of the central protuberance. This is Large ribosomal subunit protein bL25 from Staphylococcus carnosus (strain TM300).